Here is a 75-residue protein sequence, read N- to C-terminus: Exodeoxyribonuclease 7 small subunit (75 aa).

Belongs to the XseB family. In terms of assembly, heterooligomer composed of large and small subunits.

Its subcellular location is the cytoplasm. The enzyme catalyses Exonucleolytic cleavage in either 5'- to 3'- or 3'- to 5'-direction to yield nucleoside 5'-phosphates.. Its function is as follows. Bidirectionally degrades single-stranded DNA into large acid-insoluble oligonucleotides, which are then degraded further into small acid-soluble oligonucleotides. In Thermoanaerobacter sp. (strain X514), this protein is Exodeoxyribonuclease 7 small subunit.